A 133-amino-acid polypeptide reads, in one-letter code: Large ribosomal subunit protein uL14 (133 aa).

Belongs to the universal ribosomal protein uL14 family. In terms of assembly, part of the 50S ribosomal subunit. Forms a cluster with proteins L3 and L24e, part of which may contact the 16S rRNA in 2 intersubunit bridges.

Functionally, binds to 23S rRNA. Forms part of two intersubunit bridges in the 70S ribosome. The protein is Large ribosomal subunit protein uL14 of Methanopyrus kandleri (strain AV19 / DSM 6324 / JCM 9639 / NBRC 100938).